Consider the following 405-residue polypeptide: Cytoplasmic tRNA 2-thiolation protein 2 (405 aa).

The protein belongs to the CTU2/NCS2 family.

Its subcellular location is the cytoplasm. It participates in tRNA modification; 5-methoxycarbonylmethyl-2-thiouridine-tRNA biosynthesis. Plays a central role in 2-thiolation of mcm(5)S(2)U at tRNA wobble positions of tRNA(Lys), tRNA(Glu) and tRNA(Gln). May act by forming a heterodimer with NCS6/CTU1 that ligates sulfur from thiocarboxylated URM1 onto the uridine of tRNAs at wobble position. This Drosophila melanogaster (Fruit fly) protein is Cytoplasmic tRNA 2-thiolation protein 2.